The primary structure comprises 158 residues: UPF0145 protein Psyc_1853 (158 aa).

Polar residues predominate over residues 113-122; it reads IYQSSNQPPS. Residues 113–158 are disordered; sequence IYQSSNQPPSHHSGHSQYEEPVPSAAQPSTTAQANDDLPRFNPFGE.

This sequence belongs to the UPF0145 family.

The protein is UPF0145 protein Psyc_1853 of Psychrobacter arcticus (strain DSM 17307 / VKM B-2377 / 273-4).